A 293-amino-acid chain; its full sequence is MTNKYIGRFAPSPSGPLHAGSLVAAMASYLDAKAHQGQWLVRIEDIDETRTVADATTAIMDALAVFGMQHDGEVVVQSQRKDLYQAAFERLKDLVYPCGCTRREIADSRLGVAADGAAIYPGTCRHGLAAGKTARTWRVRVPDANENNEAINFDDRWLGPLTQHLASEVGDFVLKRADGFWAYQLAVVVDDADQEVTHIVRGTDLLESTGRQIYLQRMLGFPTPHYMHVPVVLNDVGEKLSKQTGALALDLAHPMDELMKAARFLELSLPPVNSITEFWRVAIAAWARRFAQE.

Residues 8–12 (RFAPS) and Glu44 each bind L-glutamate. The short motif at 11–21 (PSPSGPLHAGS) is the 'HIGH' region element. Residues Cys98, Cys100, Tyr120, and Cys124 each coordinate Zn(2+). Residues Tyr183 and Arg201 each coordinate L-glutamate. The short motif at 239–243 (KLSKQ) is the 'KMSKS' region element. Residue Lys242 participates in ATP binding.

Belongs to the class-I aminoacyl-tRNA synthetase family. GluQ subfamily. It depends on Zn(2+) as a cofactor.

Functionally, catalyzes the tRNA-independent activation of glutamate in presence of ATP and the subsequent transfer of glutamate onto a tRNA(Asp). Glutamate is transferred on the 2-amino-5-(4,5-dihydroxy-2-cyclopenten-1-yl) moiety of the queuosine in the wobble position of the QUC anticodon. The sequence is that of Glutamyl-Q tRNA(Asp) synthetase from Janthinobacterium sp. (strain Marseille) (Minibacterium massiliensis).